A 162-amino-acid polypeptide reads, in one-letter code: Heat shock protein beta-6 (162 aa).

An involved in stabilization of the HSPB1:HSBP6 heterodimer region spans residues 1 to 72; the sequence is MEIPVPVQPS…PTAQVSTDSG (72 aa). A Phosphoserine modification is found at Ser-16. Positions 56–162 constitute a sHSP domain; the sequence is RAPSVALPTA…AQLPSPPAAK (107 aa). Deamidated glutamine is present on Gln-66. Phosphoserine is present on Ser-157.

This sequence belongs to the small heat shock protein (HSP20) family. In terms of assembly, homodimer. Small heat shock proteins form high molecular mass oligomers containing variable number of monomers; these oligomers display a very flexible quaternary structure easily exchanging their subunits. Heterooligomer with HSPB1; formed through oligomerization of HSPB1:HSBP6 dimers; subunit exchange leads to formation of at least two different heterooligomeric complexes, differing in variable quantities of HSPB1 and HSPB6 homodimers in addition to HSPB1:HSPB6 heterodimers. Heterooligomer with CRYAB; large heterooligomers consist of CRYAB homodimers and HSPB5:HSPB6 heterodimers but lacking HSPB6 homodimers. Interacts with BAG3. Interacts (phosphorylated) with YWHAZ. Interacts with PDE4A and PDE4D; required for maintenance of the non-phosphorylated state of HSPB6 under basal conditions. Interacts with KDR. Interacts with PRKD1. In terms of processing, phosphorylated at Ser-16 by PKA and probably PKD1K; required to protect cardiomyocytes from apoptosis.

The protein resides in the cytoplasm. It localises to the nucleus. It is found in the secreted. In terms of biological role, small heat shock protein which functions as a molecular chaperone probably maintaining denatured proteins in a folding-competent state. Seems to have versatile functions in various biological processes. Plays a role in regulating muscle function such as smooth muscle vasorelaxation and cardiac myocyte contractility. May regulate myocardial angiogenesis implicating KDR. Overexpression mediates cardioprotection and angiogenesis after induced damage. Stabilizes monomeric YWHAZ thereby supporting YWHAZ chaperone-like activity. The sequence is that of Heat shock protein beta-6 (Hspb6) from Mus musculus (Mouse).